The sequence spans 454 residues: Growth/differentiation factor 9 (454 aa).

A signal peptide spans 1 to 24; that stretch reads MARPNKFLLWFCCFAWLCFPISLG. A propeptide spanning residues 25 to 319 is cleaved from the precursor; sequence SQASGGEAQI…GRSSHHRHRR (295 aa). 5 N-linked (GlcNAc...) asparagine glycosylation sites follow: Asn106, Asn163, Asn236, Asn255, and Asn268. The tract at residues 303-330 is disordered; sequence GEEAAEDGRSSHHRHRRGQETVSSELKK. A Phosphoserine; by CK modification is found at Ser325. Asn338 carries an N-linked (GlcNAc...) asparagine glycan. Cystine bridges form between Cys353-Cys419, Cys382-Cys451, and Cys386-Cys453.

The protein belongs to the TGF-beta family. As to quaternary structure, homodimer or heterodimer (Potential). But, in contrast to other members of this family, cannot be disulfide-linked. Post-translationally, phosphorylated; phosphorylation is critical for GDF9 function. In vitro, can be phosphorylated by CK at Ser-325. Expressed in ovarian granulosa cells. Present in oocytes of primary follicles (at protein level).

It localises to the secreted. Required for ovarian folliculogenesis. Promotes primordial follicle development. Stimulates granulosa cell proliferation. Promotes cell transition from G0/G1 to S and G2/M phases, through an increase of CCND1 and CCNE1 expression, and RB1 phosphorylation. It regulates STAR expression and cAMP-dependent progesterone release in granulosa and thecal cells. Attenuates the suppressive effects of activin A on STAR expression and progesterone production by increasing the expression of inhibin B. It suppresses FST and FSTL3 production in granulosa-lutein cells. The protein is Growth/differentiation factor 9 (GDF9) of Homo sapiens (Human).